A 214-amino-acid polypeptide reads, in one-letter code: Cytochrome b (214 aa).

4 consecutive transmembrane segments (helical) span residues 31-51 (FGSM…FLAI), 75-96 (WIMQ…YTHI), 111-131 (WLSG…GYVL), and 176-196 (FFAL…IHIL). Residues histidine 81 and histidine 95 each contribute to the heme b site. The heme b site is built by histidine 180 and histidine 194. Histidine 199 provides a ligand contact to a ubiquinone.

The protein belongs to the cytochrome b family. The cytochrome bc1 complex contains 3 respiratory subunits (MT-CYB, CYC1 and UQCRFS1), 2 core proteins (UQCRC1 and UQCRC2) and probably 6 low-molecular weight proteins. Heme b is required as a cofactor.

It is found in the mitochondrion inner membrane. In terms of biological role, component of the ubiquinol-cytochrome c reductase complex (complex III or cytochrome b-c1 complex) that is part of the mitochondrial respiratory chain. The b-c1 complex mediates electron transfer from ubiquinol to cytochrome c. Contributes to the generation of a proton gradient across the mitochondrial membrane that is then used for ATP synthesis. In Lachesis muta muta (Bushmaster), this protein is Cytochrome b (MT-CYB).